Reading from the N-terminus, the 367-residue chain is Acryloyl-CoA reductase electron transfer subunit beta (367 aa).

305 to 333 (VYVALGISGAIQHKAGMQDSELIIAVNKD) is an FAD binding site.

In terms of assembly, heterohexadecamer; tetramer of tetramers. Each tetramer is composed of 2 alpha (AcrC), a beta (AcrA) and a gamma (AcrB) subunit.

The protein localises to the cytoplasm. In terms of biological role, part of the ETF-acryloyl-CoA reductase complex involved in the pathway of L-alanine fermentation. The electron transfer flavoprotein (ETF) serves as a specific electron acceptor for acryloyl-CoA reductase. The sequence is that of Acryloyl-CoA reductase electron transfer subunit beta (acrA) from Anaerotignum propionicum (Clostridium propionicum).